Consider the following 607-residue polypeptide: WD repeat-containing protein 1-A (607 aa).

WD repeat units follow at residues 4 to 45, 48 to 87, 93 to 135, 138 to 176, 180 to 218, 224 to 263, 270 to 306, 311 to 351, 358 to 408, 432 to 474, 480 to 518, 523 to 561, and 566 to 604; these read ELKK…IRNI, PAIA…IWDT, LLKY…LWDT, SVGE…FLEG, KFKF…LYDG, VCSL…IWDV, TTFN…YLDK, RPLR…YWDA, TFTG…KMDV, LKDK…LYSI, KDEG…VFSV, SEKN…VWTL, and TRIK…QWTV.

Belongs to the WD repeat AIP1 family.

It localises to the cell membrane. The protein localises to the cytoplasm. It is found in the cytoskeleton. Its subcellular location is the nucleus. Induces disassembly of actin filaments in conjunction with ADF/cofilin family proteins. Doesn't sever actin filaments alone, but caps the barbed ends of filaments severed by cofilin, which blocks annealing and depolymerization and allows more extensive severing by cofilin. The chain is WD repeat-containing protein 1-A (wdr1-a) from Xenopus laevis (African clawed frog).